Consider the following 1161-residue polypeptide: PAN2-PAN3 deadenylation complex catalytic subunit pan2 (1161 aa).

WD repeat units lie at residues 20–59 (GLPTIATTIAFDDVSELLWAGNEFGRITSFYGPELQRYTS), 102–145 (AHEE…DKLQ), and 276–315 (ANVSFMLGIDISPSGEALAINDAECAIHLWGSPSKVHFNE). A linker region spans residues 316 to 452 (MSKEVEFADV…GAKLNGEAED (137 aa)). Residues 453-822 (DPLLKYSNVE…IPCVLAYQAR (370 aa)) form the USP domain. The Exonuclease domain maps to 871-1049 (VALDTEFVDL…VEDARMALRL (179 aa)). Positions 874, 876, 983, and 1042 each coordinate a divalent metal cation. Residues 1094–1161 (GTAVTMQNNS…GDFFGGSPLK (68 aa)) form a disordered region. Positions 1097 to 1110 (VTMQNNSGRNTPST) are enriched in polar residues. The span at 1116–1129 (AAAAAATTSAPATP) shows a compositional bias: low complexity. Positions 1145 to 1155 (TFGGPGTGDFF) are enriched in gly residues.

The protein belongs to the peptidase C19 family. PAN2 subfamily. In terms of assembly, forms a heterotrimer with an asymmetric homodimer of the regulatory subunit pan3 to form the poly(A)-nuclease (PAN) deadenylation complex. A divalent metal cation is required as a cofactor.

The protein localises to the cytoplasm. It catalyses the reaction Exonucleolytic cleavage of poly(A) to 5'-AMP.. With respect to regulation, positively regulated by the regulatory subunit pan3. Its function is as follows. Catalytic subunit of the poly(A)-nuclease (PAN) deadenylation complex, one of two cytoplasmic mRNA deadenylases involved in mRNA turnover. PAN specifically shortens poly(A) tails of RNA and the activity is stimulated by poly(A)-binding protein pab1. PAN deadenylation is followed by rapid degradation of the shortened mRNA tails by the CCR4-NOT complex. Deadenylated mRNAs are then degraded by two alternative mechanisms, namely exosome-mediated 3'-5' exonucleolytic degradation, or deadenylation-dependent mRNA decaping and subsequent 5'-3' exonucleolytic degradation by xrn1. May also be involved in post-transcriptional maturation of mRNA poly(A) tails. The chain is PAN2-PAN3 deadenylation complex catalytic subunit pan2 from Aspergillus clavatus (strain ATCC 1007 / CBS 513.65 / DSM 816 / NCTC 3887 / NRRL 1 / QM 1276 / 107).